The primary structure comprises 81 residues: uncharacterized protein (81 aa).

The interval 11-34 (GSVSSSNKVSVANGSSSSSFGSNG) is disordered.

This is an uncharacterized protein from Dictyostelium discoideum (Social amoeba).